The sequence spans 629 residues: tRNA uridine 5-carboxymethylaminomethyl modification enzyme MnmG (629 aa).

FAD-binding positions include 13–18, Val125, and Ser180; that span reads GGGHAG. 273 to 287 provides a ligand contact to NAD(+); the sequence is GPRYCPSIEDKVMRF. Gln370 contributes to the FAD binding site.

The protein belongs to the MnmG family. Homodimer. Heterotetramer of two MnmE and two MnmG subunits. FAD is required as a cofactor.

The protein resides in the cytoplasm. NAD-binding protein involved in the addition of a carboxymethylaminomethyl (cmnm) group at the wobble position (U34) of certain tRNAs, forming tRNA-cmnm(5)s(2)U34. This Escherichia coli O45:K1 (strain S88 / ExPEC) protein is tRNA uridine 5-carboxymethylaminomethyl modification enzyme MnmG.